We begin with the raw amino-acid sequence, 92 residues long: Small ribosomal subunit protein uS17 (92 aa).

The protein belongs to the universal ribosomal protein uS17 family. As to quaternary structure, part of the 30S ribosomal subunit.

One of the primary rRNA binding proteins, it binds specifically to the 5'-end of 16S ribosomal RNA. This chain is Small ribosomal subunit protein uS17, found in Bordetella petrii (strain ATCC BAA-461 / DSM 12804 / CCUG 43448).